The chain runs to 476 residues: Glutamyl-tRNA(Gln) amidotransferase subunit A (476 aa).

Catalysis depends on charge relay system residues Lys70 and Ser145. The active-site Acyl-ester intermediate is the Ser169.

This sequence belongs to the amidase family. GatA subfamily. Heterotrimer of A, B and C subunits.

It carries out the reaction L-glutamyl-tRNA(Gln) + L-glutamine + ATP + H2O = L-glutaminyl-tRNA(Gln) + L-glutamate + ADP + phosphate + H(+). Functionally, allows the formation of correctly charged Gln-tRNA(Gln) through the transamidation of misacylated Glu-tRNA(Gln) in organisms which lack glutaminyl-tRNA synthetase. The reaction takes place in the presence of glutamine and ATP through an activated gamma-phospho-Glu-tRNA(Gln). In Methanosarcina acetivorans (strain ATCC 35395 / DSM 2834 / JCM 12185 / C2A), this protein is Glutamyl-tRNA(Gln) amidotransferase subunit A.